Consider the following 220-residue polypeptide: Octanoyltransferase (220 aa).

The BPL/LPL catalytic domain occupies 36-212 (ADSPDQFWLV…CLARQLGRRL (177 aa)). Substrate is bound by residues 75-82 (RGGQVTYH), 142-144 (SLG), and 155-157 (GVA). Cys-173 serves as the catalytic Acyl-thioester intermediate.

Belongs to the LipB family.

Its subcellular location is the cytoplasm. The enzyme catalyses octanoyl-[ACP] + L-lysyl-[protein] = N(6)-octanoyl-L-lysyl-[protein] + holo-[ACP] + H(+). The protein operates within protein modification; protein lipoylation via endogenous pathway; protein N(6)-(lipoyl)lysine from octanoyl-[acyl-carrier-protein]: step 1/2. In terms of biological role, catalyzes the transfer of endogenously produced octanoic acid from octanoyl-acyl-carrier-protein onto the lipoyl domains of lipoate-dependent enzymes. Lipoyl-ACP can also act as a substrate although octanoyl-ACP is likely to be the physiological substrate. This chain is Octanoyltransferase, found in Chromohalobacter salexigens (strain ATCC BAA-138 / DSM 3043 / CIP 106854 / NCIMB 13768 / 1H11).